The sequence spans 118 residues: UPF0102 protein PC1_0307 (118 aa).

It belongs to the UPF0102 family.

This chain is UPF0102 protein PC1_0307, found in Pectobacterium carotovorum subsp. carotovorum (strain PC1).